Here is a 248-residue protein sequence, read N- to C-terminus: Adenosylcobinamide-GDP ribazoletransferase (248 aa).

Transmembrane regions (helical) follow at residues 30-50 (LAESFSFFPLVGLILGFCYAL), 54-74 (VLSGVVPSLLLAVAITALTAV), 112-132 (FGALAIALAVAFKVAALDAVI), 134-154 (AGSFLPLLLVPVVSRLAMVLA), and 188-208 (AVSAFLVQPVFGLCALVLAAG).

This sequence belongs to the CobS family. Mg(2+) serves as cofactor.

The protein resides in the cell inner membrane. The enzyme catalyses alpha-ribazole + adenosylcob(III)inamide-GDP = adenosylcob(III)alamin + GMP + H(+). The catalysed reaction is alpha-ribazole 5'-phosphate + adenosylcob(III)inamide-GDP = adenosylcob(III)alamin 5'-phosphate + GMP + H(+). It functions in the pathway cofactor biosynthesis; adenosylcobalamin biosynthesis; adenosylcobalamin from cob(II)yrinate a,c-diamide: step 7/7. Its function is as follows. Joins adenosylcobinamide-GDP and alpha-ribazole to generate adenosylcobalamin (Ado-cobalamin). Also synthesizes adenosylcobalamin 5'-phosphate from adenosylcobinamide-GDP and alpha-ribazole 5'-phosphate. In Syntrophobacter fumaroxidans (strain DSM 10017 / MPOB), this protein is Adenosylcobinamide-GDP ribazoletransferase.